Here is a 207-residue protein sequence, read N- to C-terminus: Large ribosomal subunit protein uL4 (207 aa).

The tract at residues Thr-48 to Ala-75 is disordered.

Belongs to the universal ribosomal protein uL4 family. Part of the 50S ribosomal subunit.

Functionally, one of the primary rRNA binding proteins, this protein initially binds near the 5'-end of the 23S rRNA. It is important during the early stages of 50S assembly. It makes multiple contacts with different domains of the 23S rRNA in the assembled 50S subunit and ribosome. In terms of biological role, forms part of the polypeptide exit tunnel. The sequence is that of Large ribosomal subunit protein uL4 from Leuconostoc citreum (strain KM20).